An 86-amino-acid polypeptide reads, in one-letter code: RNA-binding protein Hfq (86 aa).

A Sm domain is found at 9–68; it reads DPYLNTLRKERVPVSIYLVNGIKLQGQIESFDQFVILLKNTVSQMVYKHAISTVVPSRPV. Positions 66–86 are disordered; that stretch reads RPVRLPSAGDSEQADAEPGNA.

It belongs to the Hfq family. As to quaternary structure, homohexamer.

Functionally, RNA chaperone that binds small regulatory RNA (sRNAs) and mRNAs to facilitate mRNA translational regulation in response to envelope stress, environmental stress and changes in metabolite concentrations. Also binds with high specificity to tRNAs. The protein is RNA-binding protein Hfq of Ectopseudomonas mendocina (strain ymp) (Pseudomonas mendocina).